Here is a 500-residue protein sequence, read N- to C-terminus: Mucin-like protein 3 (500 aa).

Positions 1 to 27 are cleaved as a signal peptide; that stretch reads MAQPTSGLYSTFGFFICLLFFPASWEA. Residues 28–429 lie on the Extracellular side of the membrane; the sequence is GANTFQELQK…GENNSFPVWA (402 aa). Disordered stretches follow at residues 55-198 and 275-324; these read THRA…SQKP and EGKT…PTAS. A compositionally biased stretch (basic and acidic residues) spans 58–71; the sequence is ASSDQKTSRQHPPD. A compositionally biased stretch (polar residues) spans 76 to 89; it reads TATQKAKNQCNTTR. An N-linked (GlcNAc...) asparagine glycan is attached at asparagine 108. Basic and acidic residues-rich tracts occupy residues 111-123 and 132-142; these read VRHE…EKDL and ARNERSADDPR. N-linked (GlcNAc...) asparagine glycosylation occurs at asparagine 148. Polar residues-rich tracts occupy residues 159–178, 279–289, and 298–324; these read PRRN…TTKS, SPASESSSQAQ, and TSAS…PTAS. Residues 430 to 450 form a helical membrane-spanning segment; sequence IVIVILMAVIILLVFIGLILL. Residues 451 to 500 are Cytoplasmic-facing; sequence VSCASRARHVLTQNSEEPEPQPEDKGSRNSYPVYLMEQQNLNLNQIPSPP.

The protein localises to the cell membrane. The protein resides in the cytoplasm. Functionally, may modulate NF-kappaB signaling and play a role in cell growth. The chain is Mucin-like protein 3 from Mus musculus (Mouse).